The chain runs to 233 residues: Putative N-acetylmannosamine-6-phosphate 2-epimerase (233 aa).

The protein belongs to the NanE family.

It carries out the reaction an N-acyl-D-glucosamine 6-phosphate = an N-acyl-D-mannosamine 6-phosphate. It functions in the pathway amino-sugar metabolism; N-acetylneuraminate degradation; D-fructose 6-phosphate from N-acetylneuraminate: step 3/5. Functionally, converts N-acetylmannosamine-6-phosphate (ManNAc-6-P) to N-acetylglucosamine-6-phosphate (GlcNAc-6-P). This is Putative N-acetylmannosamine-6-phosphate 2-epimerase from Yersinia pseudotuberculosis serotype O:1b (strain IP 31758).